Here is a 198-residue protein sequence, read N- to C-terminus: ATP-dependent Clp protease proteolytic subunit (198 aa).

Catalysis depends on serine 98, which acts as the Nucleophile. Residue histidine 123 is part of the active site.

This sequence belongs to the peptidase S14 family. In terms of assembly, fourteen ClpP subunits assemble into 2 heptameric rings which stack back to back to give a disk-like structure with a central cavity, resembling the structure of eukaryotic proteasomes.

Its subcellular location is the cytoplasm. It carries out the reaction Hydrolysis of proteins to small peptides in the presence of ATP and magnesium. alpha-casein is the usual test substrate. In the absence of ATP, only oligopeptides shorter than five residues are hydrolyzed (such as succinyl-Leu-Tyr-|-NHMec, and Leu-Tyr-Leu-|-Tyr-Trp, in which cleavage of the -Tyr-|-Leu- and -Tyr-|-Trp bonds also occurs).. Its function is as follows. Cleaves peptides in various proteins in a process that requires ATP hydrolysis. Has a chymotrypsin-like activity. Plays a major role in the degradation of misfolded proteins. This chain is ATP-dependent Clp protease proteolytic subunit, found in Levilactobacillus brevis (strain ATCC 367 / BCRC 12310 / CIP 105137 / JCM 1170 / LMG 11437 / NCIMB 947 / NCTC 947) (Lactobacillus brevis).